Reading from the N-terminus, the 5058-residue chain is ATP-binding cassette sub-family A member 13 (5058 aa).

A run of 7 helical transmembrane segments spans residues 23–43, 3568–3588, 3607–3627, 3648–3668, 3679–3699, 3709–3729, and 3752–3772; these read PVLF…LTVL, VGFF…ASMV, GVHP…VLTI, FIVF…SYLL, ALCT…LLVL, TFLC…ITFL, and FGWV…CGWY. In terms of domain architecture, ABC transporter 1 spans 3842 to 4074; the sequence is VTLVSVTKEY…YGQGLRLTLT (233 aa). 3875–3882 lines the ATP pocket; it reads GTNGAGKT. The next 7 helical transmembrane spans lie at 4226 to 4246, 4458 to 4478, 4504 to 4524, 4536 to 4556, 4568 to 4588, 4607 to 4627, and 4651 to 4671; these read TLAD…LFMV, VALC…SSVV, FLYD…VIVA, LAAT…WMYL, FISY…ITIM, VLKW…LVEL, and MNFL…LLLL. The ABC transporter 2 domain occupies 4718–4956; sequence LVLYNLSKHY…FGDGYTVKVW (239 aa). Residue 4754 to 4761 coordinates ATP; the sequence is GVNGAGKS.

The protein belongs to the ABC transporter superfamily. Significantly expressed in the bone marrow, trachea, testis, thyroid and lung as well as in skin fibroblasts.

It localises to the cytoplasmic vesicle membrane. The enzyme catalyses cholesterol(in) + ATP + H2O = cholesterol(out) + ADP + phosphate + H(+). In terms of biological role, may mediate the cholesterol and gangliosides transport from the plasma membrane to intracellular vesicles in an ATP hydrolysis dependent manner, thus playing a role in their internalization by endocytic retrograde transport and may also participate in the endocytosis of synaptic vesicle in cortical neurons. The polypeptide is ATP-binding cassette sub-family A member 13 (Homo sapiens (Human)).